Here is a 151-residue protein sequence, read N- to C-terminus: Ribosome maturation factor RimP (151 aa).

It belongs to the RimP family.

It localises to the cytoplasm. Functionally, required for maturation of 30S ribosomal subunits. In Vibrio campbellii (strain ATCC BAA-1116), this protein is Ribosome maturation factor RimP.